A 505-amino-acid chain; its full sequence is Cytochrome P450 71A2 (505 aa).

The helical transmembrane segment at 7 to 27 (WYSLLIPLFVFIFLLIHHCFF) threads the bilayer. C448 contributes to the heme binding site.

Belongs to the cytochrome P450 family. Requires heme as cofactor.

It is found in the membrane. May have a role in maturation, such as during flavor formation or other metabolite production specific to aging tissues. This Solanum melongena (Eggplant) protein is Cytochrome P450 71A2 (CYP71A2).